The primary structure comprises 631 residues: DNA mismatch repair protein MutL (631 aa).

Disordered stretches follow at residues 337 to 362 and 400 to 429; these read PHSPQIDDSSPYVKPETESSAFELQS and AVQSNAFGSMSVPRETRSGSSGESRPRAEL.

This sequence belongs to the DNA mismatch repair MutL/HexB family.

Its function is as follows. This protein is involved in the repair of mismatches in DNA. It is required for dam-dependent methyl-directed DNA mismatch repair. May act as a 'molecular matchmaker', a protein that promotes the formation of a stable complex between two or more DNA-binding proteins in an ATP-dependent manner without itself being part of a final effector complex. The chain is DNA mismatch repair protein MutL from Shewanella oneidensis (strain ATCC 700550 / JCM 31522 / CIP 106686 / LMG 19005 / NCIMB 14063 / MR-1).